The following is a 98-amino-acid chain: Large ribosomal subunit protein bL28 (98 aa).

The protein belongs to the bacterial ribosomal protein bL28 family.

The polypeptide is Large ribosomal subunit protein bL28 (Rhizobium etli (strain ATCC 51251 / DSM 11541 / JCM 21823 / NBRC 15573 / CFN 42)).